The sequence spans 445 residues: Methylenetetrahydrofolate--tRNA-(uracil-5-)-methyltransferase TrmFO (445 aa).

FAD is bound at residue 9–14 (GGGLAG).

The protein belongs to the MnmG family. TrmFO subfamily. FAD serves as cofactor.

The protein localises to the cytoplasm. The catalysed reaction is uridine(54) in tRNA + (6R)-5,10-methylene-5,6,7,8-tetrahydrofolate + NADH + H(+) = 5-methyluridine(54) in tRNA + (6S)-5,6,7,8-tetrahydrofolate + NAD(+). The enzyme catalyses uridine(54) in tRNA + (6R)-5,10-methylene-5,6,7,8-tetrahydrofolate + NADPH + H(+) = 5-methyluridine(54) in tRNA + (6S)-5,6,7,8-tetrahydrofolate + NADP(+). Catalyzes the folate-dependent formation of 5-methyl-uridine at position 54 (M-5-U54) in all tRNAs. The chain is Methylenetetrahydrofolate--tRNA-(uracil-5-)-methyltransferase TrmFO from Solibacter usitatus (strain Ellin6076).